The sequence spans 331 residues: Aflatoxin B1 aldehyde reductase member 4 (331 aa).

Asp-44 is a binding site for NADP(+). Tyr-49 functions as the Proton donor in the catalytic mechanism. Residue Ser-85 is modified to Phosphoserine. His-113 provides a ligand contact to substrate. NADP(+) is bound by residues Ser-143–Asn-144, Gln-169, Asn-198–Lys-208, and Arg-222. Tyr-232 contributes to the substrate binding site. Ser-290–Asn-298 is an NADP(+) binding site.

This sequence belongs to the aldo/keto reductase family. Aldo/keto reductase 2 subfamily. In terms of tissue distribution, mainly expressed in uterus.

Can reduce the dialdehyde protein-binding form of aflatoxin B1 (AFB1) to the non-binding AFB1 dialcohol. May be involved in protection of liver against the toxic and carcinogenic effects of AFB1, a potent hepatocarcinogen. This chain is Aflatoxin B1 aldehyde reductase member 4 (AKR7L), found in Homo sapiens (Human).